A 270-amino-acid chain; its full sequence is NAD kinase (270 aa).

The active-site Proton acceptor is D49. NAD(+) is bound by residues 49 to 50 (DG), R54, 126 to 127 (NE), R152, D154, 165 to 170 (TAYNKS), A189, and Q227.

This sequence belongs to the NAD kinase family. The cofactor is a divalent metal cation.

Its subcellular location is the cytoplasm. The catalysed reaction is NAD(+) + ATP = ADP + NADP(+) + H(+). Functionally, involved in the regulation of the intracellular balance of NAD and NADP, and is a key enzyme in the biosynthesis of NADP. Catalyzes specifically the phosphorylation on 2'-hydroxyl of the adenosine moiety of NAD to yield NADP. In Lactococcus lactis subsp. lactis (strain IL1403) (Streptococcus lactis), this protein is NAD kinase.